Consider the following 178-residue polypeptide: Small ribosomal subunit protein uS4 (178 aa).

The S4 RNA-binding domain maps to 104 to 166; that stretch reads RRLQTLVYRK…PNSPMALENH (63 aa).

This sequence belongs to the universal ribosomal protein uS4 family. As to quaternary structure, part of the 30S ribosomal subunit. Contacts protein S5. The interaction surface between S4 and S5 is involved in control of translational fidelity.

Functionally, one of the primary rRNA binding proteins, it binds directly to 16S rRNA where it nucleates assembly of the body of the 30S subunit. Its function is as follows. With S5 and S12 plays an important role in translational accuracy. In Methanococcus vannielii (strain ATCC 35089 / DSM 1224 / JCM 13029 / OCM 148 / SB), this protein is Small ribosomal subunit protein uS4.